We begin with the raw amino-acid sequence, 384 residues long: Urea transporter 1 (384 aa).

Positions 1-23 are disordered; the sequence is MDDNPTAVKLDQGGNQAPQGQGR. Transmembrane regions (helical) follow at residues 61–81, 85–105, 111–131, 138–158, and 168–188; these read ISQV…VGLL, PWCA…ALLL, AITA…MAIY, FWWL…FSSA, and LPVF…ATGH. N-linked (GlcNAc...) asparagine glycosylation occurs at asparagine 206. Helical transmembrane passes span 237 to 257, 279 to 299, and 327 to 347; these read GGIF…HAAI, GLWG…FMAL, and VVGL…FLLL.

It belongs to the urea transporter family. Homotrimer; each subunit contains a pore through which urea permeates. Identified in a complex with STOM.

It localises to the cell membrane. The protein localises to the basolateral cell membrane. The catalysed reaction is urea(in) = urea(out). Its function is as follows. Mediates the transport of urea driven by a concentration gradient across the cell membranes of erythrocytes and the renal inner medullary collecting duct which is critical to the urinary concentrating mechanism. Facilitates water transport in erythrocytes. In Capra hircus (Goat), this protein is Urea transporter 1 (SLC14A1).